The following is a 401-amino-acid chain: Nicotinate phosphoribosyltransferase (401 aa).

His221 bears the Phosphohistidine; by autocatalysis mark.

Belongs to the NAPRTase family. Post-translationally, transiently phosphorylated on a His residue during the reaction cycle. Phosphorylation strongly increases the affinity for substrates and increases the rate of nicotinate D-ribonucleotide production. Dephosphorylation regenerates the low-affinity form of the enzyme, leading to product release.

The enzyme catalyses nicotinate + 5-phospho-alpha-D-ribose 1-diphosphate + ATP + H2O = nicotinate beta-D-ribonucleotide + ADP + phosphate + diphosphate. It functions in the pathway cofactor biosynthesis; NAD(+) biosynthesis; nicotinate D-ribonucleotide from nicotinate: step 1/1. In terms of biological role, catalyzes the synthesis of beta-nicotinate D-ribonucleotide from nicotinate and 5-phospho-D-ribose 1-phosphate at the expense of ATP. The sequence is that of Nicotinate phosphoribosyltransferase from Pectobacterium atrosepticum (strain SCRI 1043 / ATCC BAA-672) (Erwinia carotovora subsp. atroseptica).